The sequence spans 544 residues: Cannabidiolic acid synthase (544 aa).

The N-terminal stretch at 1-28 (MKCSTFSFWFVCKIIFFFFSFNIQTSIA) is a signal peptide. The cysteines at positions 37 and 99 are disulfide-linked. N-linked (GlcNAc...) asparagine glycosylation is found at N45 and N65. The 175-residue stretch at 77-251 (TTPKPLVIVT…VAWKIRLVAV (175 aa)) folds into the FAD-binding PCMH-type domain. Residues 109 to 115 (TRSGGHD) and S120 each bind FAD. Residues 114-176 (HDSEGMSYIS…ENLSLAAGYC (63 aa)) constitute a cross-link (6-(S-cysteinyl)-8alpha-(pros-histidyl)-FAD (His-Cys)). N-linked (GlcNAc...) asparagine glycosylation occurs at N168. Residues C176, 180–184 (CAGGH), Y190, E236, and I241 contribute to the FAD site. H291 contacts cannabigerolate. N-linked (GlcNAc...) asparagine glycosylation is found at N296, N304, and N328. Cannabigerolate contacts are provided by Y416 and E441. 480-482 (YLN) serves as a coordination point for FAD. Catalysis depends on Y483, which acts as the Proton acceptor. N-linked (GlcNAc...) asparagine glycosylation occurs at N498.

Belongs to the oxygen-dependent FAD-linked oxidoreductase family. In terms of assembly, monomer. Requires FAD as cofactor. Post-translationally, glycosylated. The FAD cofactor is bound via a bicovalent 6-S-cysteinyl, 8alpha-N1-histidyl FAD linkage. In terms of tissue distribution, expressed in young leaves.

The protein localises to the secreted. Its subcellular location is the extracellular space. The protein resides in the apoplast. It carries out the reaction cannabigerolate + O2 = cannabidiolate + H2O2. It participates in secondary metabolite biosynthesis; terpenoid biosynthesis. Its activity is regulated as follows. Inhibited by Hg(2+). Oxidoreductase involved in the biosynthesis of cannabinoids-related terpenophenolic natural products, which have pharmacological activity. Catalyzes the stereoselective oxidative cyclization of the monoterpene moiety in cannabigerolic acid (CBGA), producing cannabidiolate (CBDA), the major cannabioid in fiber-type Cannabis plants. Can also use cannabinerolic acid as substrate, but not cannabigerol or cannabinerol. This Cannabis sativa (Hemp) protein is Cannabidiolic acid synthase.